A 185-amino-acid polypeptide reads, in one-letter code: Threonylcarbamoyl-AMP synthase (185 aa).

A YrdC-like domain is found at 7 to 185; it reads AAQRRAARAH…IDFASGRVLR (179 aa).

Belongs to the SUA5 family. TsaC subfamily.

The protein resides in the cytoplasm. It carries out the reaction L-threonine + hydrogencarbonate + ATP = L-threonylcarbamoyladenylate + diphosphate + H2O. In terms of biological role, required for the formation of a threonylcarbamoyl group on adenosine at position 37 (t(6)A37) in tRNAs that read codons beginning with adenine. Catalyzes the conversion of L-threonine, HCO(3)(-)/CO(2) and ATP to give threonylcarbamoyl-AMP (TC-AMP) as the acyladenylate intermediate, with the release of diphosphate. The polypeptide is Threonylcarbamoyl-AMP synthase (Laribacter hongkongensis (strain HLHK9)).